A 491-amino-acid chain; its full sequence is MGSFLLKKAVGLSNISDLLDKSGIFYNYSTKVLPSFDYDTAGKHIAREDSTWNGKYVIGQPAEVTYSFPKWEGKFNQFGNKNPYEFNELQKEHARKSLDAWSDIANIKFTEVAVGNVDGMKASDVKTDITFGNIYDPNGTFQAYATLPNTYAYGKDLSGQAWFSDYHYAGNTTPELGNYGRLTIIHEIGHTLGLMHPGDYNAGQNVPGYLKSDYAEDSRQYTVMSYWDEYETGAHFQGAYAGAPLLHDISAMQYLYGANTTTRTGDDVYGFNSNTGIDYYTATDSNDKLIFSVWDSGGNDTFDFSGFYQDQLIDLRAGNFSDVGGLQKNVSIAQNVTIENAIGGFGNDIIHGNDADNTLIGGEGDDIIYGHSGNNTIYGGRGQDTLHGGTGSNTFIYKEIADSLVTAADKIMDFKTGIDKIDLSTLIQDTFSSKILNFVDNFTGNAGEATLSYNEVTNASELAINAYGYNYNPDFKIDIVGFVNYETDFIV.

Positions 1–16 (MGSFLLKKAVGLSNIS) are excised as a propeptide. His186 is a Zn(2+) binding site. Glu187 is an active-site residue. Zn(2+)-binding residues include His190, His196, and Tyr226. Ca(2+) is bound by residues Arg263, Gly265, Asp295, Gly297, Gly298, Asp300, Thr337, Glu339, Gly344, Gly346, Asp348, Asn353, Ala355, Asn357, Gly361, Gly362, Gly364, Asp366, Gly370, Gly373, Asp384, Gly388, Gly389, Gly391, Asp402, Asp409, and Asp419. Hemolysin-type calcium-binding repeat units lie at residues 342–359 (IGGF…DNTL), 360–377 (IGGE…NNTI), and 378–395 (YGGR…SNTF).

It belongs to the peptidase M10B family. It depends on Ca(2+) as a cofactor. The cofactor is Zn(2+).

The protein resides in the secreted. It catalyses the reaction Preferential cleavage of bonds with hydrophobic residues in P1'.. Its activity is regulated as follows. Ca(2+) increases protease activity. Its function is as follows. One of the virulence factors produced during swarmer cell differentiation of the bacteria, which seems to be associated with pathogenesis. The protease activity is limited to IgA1, IgA2, as well as IgG degradation. In Proteus mirabilis, this protein is Serralysin (zapA).